Reading from the N-terminus, the 220-residue chain is NADH-quinone oxidoreductase subunit I (220 aa).

4Fe-4S ferredoxin-type domains are found at residues 71-102 and 112-141; these read LQRL…IITH and DSYT…MGNR. [4Fe-4S] cluster contacts are provided by C82, C85, C88, C92, C121, C124, C127, and C131. Residues 187–220 are disordered; it reads MQATPLDYVQEPSKEESKEETPTNPESNKGDENV. Over residues 198–207 the composition is skewed to basic and acidic residues; it reads PSKEESKEET.

Belongs to the complex I 23 kDa subunit family. As to quaternary structure, NDH-1 is composed of 14 different subunits. Subunits NuoA, H, J, K, L, M, N constitute the membrane sector of the complex. [4Fe-4S] cluster serves as cofactor.

It localises to the cell inner membrane. It carries out the reaction a quinone + NADH + 5 H(+)(in) = a quinol + NAD(+) + 4 H(+)(out). Its function is as follows. NDH-1 shuttles electrons from NADH, via FMN and iron-sulfur (Fe-S) centers, to quinones in the respiratory chain. The immediate electron acceptor for the enzyme in this species is believed to be ubiquinone. Couples the redox reaction to proton translocation (for every two electrons transferred, four hydrogen ions are translocated across the cytoplasmic membrane), and thus conserves the redox energy in a proton gradient. In Helicobacter pylori (strain HPAG1), this protein is NADH-quinone oxidoreductase subunit I.